We begin with the raw amino-acid sequence, 312 residues long: uncharacterized protein (312 aa).

Belongs to the mimivirus R69 family.

This is an uncharacterized protein from Acanthamoeba polyphaga mimivirus (APMV).